The chain runs to 323 residues: Beta-ketoacyl-[acyl-carrier-protein] synthase III (323 aa).

Catalysis depends on residues cysteine 114 and histidine 250. Residues glutamine 251–arginine 255 form an ACP-binding region. The active site involves asparagine 280.

It belongs to the thiolase-like superfamily. FabH family. In terms of assembly, homodimer.

It is found in the cytoplasm. It carries out the reaction malonyl-[ACP] + acetyl-CoA + H(+) = 3-oxobutanoyl-[ACP] + CO2 + CoA. Its pathway is lipid metabolism; fatty acid biosynthesis. Catalyzes the condensation reaction of fatty acid synthesis by the addition to an acyl acceptor of two carbons from malonyl-ACP. Catalyzes the first condensation reaction which initiates fatty acid synthesis and may therefore play a role in governing the total rate of fatty acid production. Possesses both acetoacetyl-ACP synthase and acetyl transacylase activities. Its substrate specificity determines the biosynthesis of branched-chain and/or straight-chain of fatty acids. The sequence is that of Beta-ketoacyl-[acyl-carrier-protein] synthase III from Cereibacter sphaeroides (strain ATCC 17025 / ATH 2.4.3) (Rhodobacter sphaeroides).